The primary structure comprises 84 residues: RNA-binding protein Hfq (84 aa).

The region spanning 11 to 71 (DVFLNFIRKN…ISTVMPSTPI (61 aa)) is the Sm domain.

Belongs to the Hfq family. Homohexamer.

RNA chaperone that binds small regulatory RNA (sRNAs) and mRNAs to facilitate mRNA translational regulation in response to envelope stress, environmental stress and changes in metabolite concentrations. Also binds with high specificity to tRNAs. This Paramagnetospirillum magneticum (strain ATCC 700264 / AMB-1) (Magnetospirillum magneticum) protein is RNA-binding protein Hfq.